Consider the following 1181-residue polypeptide: WD repeat-containing protein 35 (1181 aa).

6 WD repeats span residues 4–43, 61–100, 105–143, 147–185, 193–241, and 246–288; these read YLSKKISIPNNVKLQCVSWNKEQGFIACGGEDGLLKVLKL, LSMNQTLEGHSGSVQVVTWNEQYQKLTTSDENGLIIVWML, WIEEMINNRNKSVVRSMSWNADGQKICIVYEDGAVIVGS, NRIWGKDLKGIQLSHVTWSADSKVLLFGMANGEIHIYDN, MKLS…IMRH, and NPVL…IVQF.

As to quaternary structure, component of the IFT complex A (IFT-A) complex. IFT-A complex is divided into a core subcomplex composed of IFT122:IFT140:WDR19 which is associated with TULP3 and a peripheral subcomplex composed of IFT43:WDR35:TTC21B. Interacts directy with IFT122, ITF43 and TTC21B. Interacts with IFT43. Interacts with CFAP61.

Its subcellular location is the cytoplasm. The protein resides in the cytoskeleton. It is found in the microtubule organizing center. It localises to the centrosome. The protein localises to the cilium axoneme. Its subcellular location is the cilium basal body. As a component of the IFT complex A (IFT-A), a complex required for retrograde ciliary transport and entry into cilia of G protein-coupled receptors (GPCRs), it is involved in ciliogenesis and ciliary protein trafficking. May promote CASP3 activation and TNF-stimulated apoptosis. The sequence is that of WD repeat-containing protein 35 from Homo sapiens (Human).